The sequence spans 412 residues: Peptide chain release factor subunit 1 (412 aa).

The protein belongs to the eukaryotic release factor 1 family. Heterodimer of two subunits, one of which binds GTP.

The protein resides in the cytoplasm. In terms of biological role, directs the termination of nascent peptide synthesis (translation) in response to the termination codons UAA, UAG and UGA. The protein is Peptide chain release factor subunit 1 of Methanobrevibacter smithii (strain ATCC 35061 / DSM 861 / OCM 144 / PS).